The chain runs to 187 residues: Interferon beta (187 aa).

Residues 1-21 form the signal peptide; the sequence is MTSRSLLPFVLSLLLPRIIMA. The residue at position 24 (Tyr-24) is a Phosphotyrosine. Cysteines 53 and 162 form a disulfide. Asn-76, Asn-95, Asn-132, and Asn-158 each carry an N-linked (GlcNAc...) asparagine glycan.

Belongs to the alpha/beta interferon family. In terms of assembly, monomer.

Its subcellular location is the secreted. Functionally, type I interferon cytokine that plays a key role in the innate immune response to infection, developing tumors and other inflammatory stimuli. Signals via binding to high-affinity (IFNAR2) and low-affinity (IFNAR1) heterodimeric receptor, activating the canonical Jak-STAT signaling pathway resulting in transcriptional activation or repression of interferon-regulated genes that encode the effectors of the interferon response, such as antiviral proteins, regulators of cell proliferation and differentiation, and immunoregulatory proteins. Signals mostly via binding to a IFNAR1-IFNAR2 heterodimeric receptor, but can also function with IFNAR1 alone and independently of Jak-STAT pathways. Elicits a wide variety of responses, including antiviral and antibacterial activities, and can regulate the development of B-cells, myelopoiesis and lipopolysaccharide (LPS)-inducible production of tumor necrosis factor. Plays a role in neuronal homeostasis by regulating dopamine turnover and protecting dopaminergic neurons: acts by promoting neuronal autophagy and alpha-synuclein clearance, thereby preventing dopaminergic neuron loss. IFNB1 is more potent than interferon-alpha (IFN-alpha) in inducing the apoptotic and antiproliferative pathways required for control of tumor cell growth. The polypeptide is Interferon beta (IFNB1) (Tachyglossus aculeatus aculeatus (Southeast Australian short-beaked echidna)).